Reading from the N-terminus, the 96-residue chain is ASNSD1 upstream open reading frame protein (96 aa).

Positions 1–10 (MPSRGTRPED) are enriched in basic and acidic residues. The tract at residues 1 to 28 (MPSRGTRPEDSSVLIPTDNSTPHKEDLS) is disordered. Residues 23–96 (HKEDLSSKIK…ENLDKTKIKK (74 aa)) adopt a coiled-coil conformation.

Component of the PAQosome complex which is responsible for the biogenesis of several protein complexes and which consists of R2TP complex members RUVBL1, RUVBL2, RPAP3 and PIH1D1, URI complex members PFDN2, PFDN6, PDRG1, UXT and URI1 as well as ASDURF, POLR2E and DNAAF10/WDR92.

Its subcellular location is the cytoplasm. This chain is ASNSD1 upstream open reading frame protein, found in Homo sapiens (Human).